A 200-amino-acid chain; its full sequence is uncharacterized protein (200 aa).

This is an uncharacterized protein from Treponema pallidum (strain Nichols).